The chain runs to 441 residues: Chitinase-like protein Idgf3 (441 aa).

A signal peptide spans 1–23; that stretch reads MTGSLWLSLALSLAVLAQFKVSA. The 417-residue stretch at 25-441 folds into the GH18 domain; it reads PNLVCFYDSQ…MLRAIKYRLL (417 aa). Cys29 and Cys56 form a disulfide bridge. Asn221 is a glycosylation site (N-linked (GlcNAc...) asparagine). The segment at 309–331 is disordered; it reads SGDSGMPVVPSTQGPAPAGPQSK. Cys342 and Cys425 are disulfide-bonded.

The protein belongs to the glycosyl hydrolase 18 family. IDGF subfamily. Glycosylated.

The protein resides in the secreted. Functionally, cooperates with insulin-like peptides to stimulate the proliferation, polarization and motility of imaginal disk cells. May act by stabilizing the binding of insulin-like peptides to its receptor through a simultaneous interaction with both molecules to form a multiprotein signaling complex. The polypeptide is Chitinase-like protein Idgf3 (Idgf3) (Drosophila yakuba (Fruit fly)).